The primary structure comprises 329 residues: Cardiolipin synthase (CMP-forming) (329 aa).

Residues 1-34 constitute a mitochondrion transit peptide; the sequence is MPPSVATHASLLLKAAAAAAHLHPKPFFSPRAAP. The disordered stretch occupies residues 27-55; that stretch reads FFSPRAAPPRIPSAPAPPAAGGSRYRPTT. Residues 32–44 are compositionally biased toward pro residues; sequence AAPPRIPSAPAPP. Transmembrane regions (helical) follow at residues 134–154, 156–176, 194–214, 228–248, and 298–318; these read LLTL…LLIS, FYME…AAAV, FGAF…LVLL, PWLL…MSAV, and VTSG…SLVV. Residues 319-329 are Mitochondrial intermembrane-facing; sequence YMRKIWRILLK.

This sequence belongs to the CDP-alcohol phosphatidyltransferase class-I family. Mn(2+) serves as cofactor.

It localises to the mitochondrion inner membrane. The catalysed reaction is a CDP-1,2-diacyl-sn-glycerol + a 1,2-diacyl-sn-glycero-3-phospho-(1'-sn-glycerol) = a cardiolipin + CMP + H(+). Catalyzes the synthesis of cardiolipin (CL) (diphosphatidylglycerol) by specifically transferring a phosphatidyl group from CDP-diacylglycerol to phosphatidylglycerol (PG). CL is a key phospholipid in mitochondrial membranes and plays important roles in maintaining the functional integrity and dynamics of mitochondria under both optimal and stress conditions. The polypeptide is Cardiolipin synthase (CMP-forming) (Oryza sativa subsp. japonica (Rice)).